A 128-amino-acid chain; its full sequence is Arsenic resistance transcriptional regulator ArsR1 (128 aa).

An HTH arsR-type domain is found at 11–103 (MREILTPPIV…AMLKGVVDAN (93 aa)). Arsenite contacts are provided by Cys-43 and Cys-45. Residues 44–67 (VCELTHALELSQPKISRHLAQLRE) constitute a DNA-binding region (H-T-H motif).

Homodimer.

The protein localises to the cytoplasm. In terms of biological role, binds arsenite and regulates the expression of arsenic efflux pumps. In vitro, also binds antimony and bismuth, but not arsenate. This chain is Arsenic resistance transcriptional regulator ArsR1, found in Pseudomonas putida (strain ATCC 47054 / DSM 6125 / CFBP 8728 / NCIMB 11950 / KT2440).